We begin with the raw amino-acid sequence, 110 residues long: Tumor suppressor candidate 2 (110 aa).

G2 carries the N-myristoyl glycine lipid modification. Residue S50 is modified to Phosphoserine.

The protein belongs to the TUSC2 family. Post-translationally, myristoylation is required for tumor suppressor activity. As to expression, strong expression in heart, lung, skeletal muscle, kidney, and pancreas, followed by brain and liver, lowest levels in placenta.

Its function is as follows. May function as a tumor suppressor, inhibiting colony formation, causing G1 arrest and ultimately inducing apoptosis in homozygous 3p21.3 120-kb region-deficient cells. This chain is Tumor suppressor candidate 2 (TUSC2), found in Homo sapiens (Human).